Consider the following 175-residue polypeptide: 3-hydroxyanthranilate 3,4-dioxygenase (175 aa).

O2 is bound at residue Arg-45. Positions 49, 55, and 93 each coordinate Fe cation. Glu-55 serves as a coordination point for substrate. 2 residues coordinate substrate: Arg-97 and Glu-107. Positions 122, 125, 159, and 162 each coordinate a divalent metal cation.

It belongs to the 3-HAO family. Fe(2+) serves as cofactor.

It localises to the cytoplasm. It carries out the reaction 3-hydroxyanthranilate + O2 = (2Z,4Z)-2-amino-3-carboxymuconate 6-semialdehyde. The protein operates within cofactor biosynthesis; NAD(+) biosynthesis; quinolinate from L-kynurenine: step 3/3. In terms of biological role, catalyzes the oxidative ring opening of 3-hydroxyanthranilate to 2-amino-3-carboxymuconate semialdehyde, which spontaneously cyclizes to quinolinate. The protein is 3-hydroxyanthranilate 3,4-dioxygenase of Lodderomyces elongisporus (strain ATCC 11503 / CBS 2605 / JCM 1781 / NBRC 1676 / NRRL YB-4239) (Yeast).